The following is a 354-amino-acid chain: Protein RecA (354 aa).

78–85 lines the ATP pocket; sequence GPESSGKT.

It belongs to the RecA family.

It localises to the cytoplasm. In terms of biological role, can catalyze the hydrolysis of ATP in the presence of single-stranded DNA, the ATP-dependent uptake of single-stranded DNA by duplex DNA, and the ATP-dependent hybridization of homologous single-stranded DNAs. It interacts with LexA causing its activation and leading to its autocatalytic cleavage. The sequence is that of Protein RecA from Zymomonas mobilis subsp. mobilis (strain ATCC 31821 / ZM4 / CP4).